The chain runs to 187 residues: Large ribosomal subunit protein uL5 (187 aa).

It belongs to the universal ribosomal protein uL5 family. Part of the 50S ribosomal subunit; part of the 5S rRNA/L5/L18/L25 subcomplex. Contacts the 5S rRNA and the P site tRNA. Forms a bridge to the 30S subunit in the 70S ribosome.

Functionally, this is one of the proteins that bind and probably mediate the attachment of the 5S RNA into the large ribosomal subunit, where it forms part of the central protuberance. In the 70S ribosome it contacts protein S13 of the 30S subunit (bridge B1b), connecting the 2 subunits; this bridge is implicated in subunit movement. Contacts the P site tRNA; the 5S rRNA and some of its associated proteins might help stabilize positioning of ribosome-bound tRNAs. The sequence is that of Large ribosomal subunit protein uL5 from Dinoroseobacter shibae (strain DSM 16493 / NCIMB 14021 / DFL 12).